The sequence spans 541 residues: uncharacterized protein (541 aa).

Transmembrane regions (helical) follow at residues 99-119 (WIVVVQISLIAFVVTFGSSVY), 131-153 (GVSISVSSLGSCVFLVGFGFGSL), 165-185 (FVVYFCTLLMFTLFQIGGGCA), 187-207 (NIWTLVILRFFQGFFGSTPLS), 224-244 (YVLPGFCTFPFLGPIFGPIIG), 256-276 (WVFWINMIMGAVVIVIIFFFM), 325-345 (LLITEPIVVCFTLYLTVVYII), 367-387 (IGLSFIGIGIGIVLAGACTPI), 409-429 (LYPLFFGSIMLPISMFWFAWT), 439-459 (WIVPLISSIFFGWSLLFVFFV), 472-494 (AASALAAATLVRYAASGGMSLVG), and 508-528 (SLLGFISVGMIPIPFLFFIYG).

It belongs to the major facilitator superfamily. CAR1 family.

The protein localises to the membrane. This is an uncharacterized protein from Schizosaccharomyces pombe (strain 972 / ATCC 24843) (Fission yeast).